Here is a 156-residue protein sequence, read N- to C-terminus: ATP synthase subunit b (156 aa).

The chain crosses the membrane as a helical span at residues 12 to 32; sequence VAFFIFVLFCMKFVWPPVIAA.

It belongs to the ATPase B chain family. In terms of assembly, F-type ATPases have 2 components, F(1) - the catalytic core - and F(0) - the membrane proton channel. F(1) has five subunits: alpha(3), beta(3), gamma(1), delta(1), epsilon(1). F(0) has three main subunits: a(1), b(2) and c(10-14). The alpha and beta chains form an alternating ring which encloses part of the gamma chain. F(1) is attached to F(0) by a central stalk formed by the gamma and epsilon chains, while a peripheral stalk is formed by the delta and b chains.

The protein resides in the cell inner membrane. F(1)F(0) ATP synthase produces ATP from ADP in the presence of a proton or sodium gradient. F-type ATPases consist of two structural domains, F(1) containing the extramembraneous catalytic core and F(0) containing the membrane proton channel, linked together by a central stalk and a peripheral stalk. During catalysis, ATP synthesis in the catalytic domain of F(1) is coupled via a rotary mechanism of the central stalk subunits to proton translocation. Its function is as follows. Component of the F(0) channel, it forms part of the peripheral stalk, linking F(1) to F(0). This Pseudomonas paraeruginosa (strain DSM 24068 / PA7) (Pseudomonas aeruginosa (strain PA7)) protein is ATP synthase subunit b.